A 701-amino-acid polypeptide reads, in one-letter code: Elongation factor G (701 aa).

The 284-residue stretch at 8 to 291 (GRYRNIGIVA…AVIDYLPAPT (284 aa)) folds into the tr-type G domain. GTP is bound by residues 17–24 (AHVDAGKT), 89–93 (DTPGH), and 143–146 (NKMD).

Belongs to the TRAFAC class translation factor GTPase superfamily. Classic translation factor GTPase family. EF-G/EF-2 subfamily.

Its subcellular location is the cytoplasm. Functionally, catalyzes the GTP-dependent ribosomal translocation step during translation elongation. During this step, the ribosome changes from the pre-translocational (PRE) to the post-translocational (POST) state as the newly formed A-site-bound peptidyl-tRNA and P-site-bound deacylated tRNA move to the P and E sites, respectively. Catalyzes the coordinated movement of the two tRNA molecules, the mRNA and conformational changes in the ribosome. This Pseudomonas savastanoi pv. phaseolicola (strain 1448A / Race 6) (Pseudomonas syringae pv. phaseolicola (strain 1448A / Race 6)) protein is Elongation factor G.